The chain runs to 217 residues: Probable transaldolase (217 aa).

Lysine 83 (schiff-base intermediate with substrate) is an active-site residue.

The protein belongs to the transaldolase family. Type 3B subfamily.

The protein resides in the cytoplasm. The catalysed reaction is D-sedoheptulose 7-phosphate + D-glyceraldehyde 3-phosphate = D-erythrose 4-phosphate + beta-D-fructose 6-phosphate. Its pathway is carbohydrate degradation; pentose phosphate pathway; D-glyceraldehyde 3-phosphate and beta-D-fructose 6-phosphate from D-ribose 5-phosphate and D-xylulose 5-phosphate (non-oxidative stage): step 2/3. Transaldolase is important for the balance of metabolites in the pentose-phosphate pathway. In Rhizorhabdus wittichii (strain DSM 6014 / CCUG 31198 / JCM 15750 / NBRC 105917 / EY 4224 / RW1) (Sphingomonas wittichii), this protein is Probable transaldolase.